Reading from the N-terminus, the 184-residue chain is Large ribosomal subunit protein uL5 (184 aa).

This sequence belongs to the universal ribosomal protein uL5 family. In terms of assembly, part of the 50S ribosomal subunit; part of the 5S rRNA/L5/L18/L25 subcomplex. Contacts the 5S rRNA and the P site tRNA. Forms a bridge to the 30S subunit in the 70S ribosome.

Its function is as follows. This is one of the proteins that bind and probably mediate the attachment of the 5S RNA into the large ribosomal subunit, where it forms part of the central protuberance. In the 70S ribosome it contacts protein S13 of the 30S subunit (bridge B1b), connecting the 2 subunits; this bridge is implicated in subunit movement. Contacts the P site tRNA; the 5S rRNA and some of its associated proteins might help stabilize positioning of ribosome-bound tRNAs. The sequence is that of Large ribosomal subunit protein uL5 from Thermotoga maritima (strain ATCC 43589 / DSM 3109 / JCM 10099 / NBRC 100826 / MSB8).